We begin with the raw amino-acid sequence, 1685 residues long: Collagen alpha-5(IV) chain (1685 aa).

Positions 1–26 are cleaved as a signal peptide; sequence MKLRGVSLAAGLFLLALSLWGQPAEA. Residues 27 to 41 form a nonhelical region (NC2) region; the sequence is AACYGCSPGSKCDCS. The segment at 42–1456 is triple-helical region; the sequence is GIKGEKGERG…QGPPGPPGTS (1415 aa). The disordered stretch occupies residues 49–1459; the sequence is ERGFPGLEGH…PGPPGTSSVA (1411 aa). Residues 52–61 are compositionally biased toward low complexity; the sequence is FPGLEGHPGL. The segment covering 62-73 has biased composition (pro residues); the sequence is PGFPGPEGPPGP. Residue asparagine 125 is glycosylated (N-linked (GlcNAc...) asparagine). The span at 188–212 shows a compositional bias: pro residues; sequence TGIPGPIGPPGPPGLMGPPGPPGLP. Residues 214–225 show a composition bias toward low complexity; it reads PKGNMGLNFQGP. Over residues 246–257 the composition is skewed to basic and acidic residues; the sequence is EQKRPIDVEFQK. The segment covering 266 to 281 has biased composition (pro residues); that stretch reads RGPPGPPGIRGPPGPP. Composition is skewed to basic and acidic residues over residues 284-305 and 324-333; these read EKGE…KDGE and PGRDGEKGQK. Residues 413 to 430 show a composition bias toward low complexity; it reads PPGISIPGPPGLDGQPGA. 4 stretches are compositionally biased toward pro residues: residues 431-445, 493-505, 620-630, and 709-727; these read PGLP…PHIP, PGQP…PGPP, MGPPGFGPPGP, and PGPP…PGAP. The span at 788 to 797 shows a compositional bias: low complexity; that stretch reads RTGLDGLPGP. Composition is skewed to pro residues over residues 848 to 859 and 868 to 880; these read PGPPGLDVPGPP and PGAP…PGSP. Composition is skewed to low complexity over residues 882 to 901, 912 to 931, 983 to 999, 1010 to 1026, and 1111 to 1120; these read LPGK…MGMM, IPGR…QGQP, YQGL…SGQP, NPGL…PGLK, and TPGAKGQPGL. Pro residues predominate over residues 1139 to 1148; it reads PGNPGLPGEP. Composition is skewed to gly residues over residues 1149–1158 and 1202–1211; these read GPVGGGGHPG and GQKGDGGLPG. Pro residues-rich tracts occupy residues 1234–1243 and 1256–1274; these read QGPPGPPGSP and PQGP…PPGL. Over residues 1295–1308 the composition is skewed to low complexity; it reads LPGLKGDQGPPGLQ. The span at 1353 to 1362 shows a compositional bias: pro residues; sequence IGPPGPPGLP. The Collagen IV NC1 domain maps to 1461 to 1685; sequence GFLITRHSQT…SRCQVCMKRT (225 aa). Disulfide bonds link cysteine 1476–cysteine 1567, cysteine 1509–cysteine 1564, cysteine 1521–cysteine 1527, cysteine 1586–cysteine 1681, cysteine 1620–cysteine 1678, and cysteine 1632–cysteine 1638. Methionine 1549 is covalently cross-linked (S-Lysyl-methionine sulfilimine (Met-Lys) (interchain with K-1667)). An S-Lysyl-methionine sulfilimine (Lys-Met) (interchain with M-1549) cross-link involves residue lysine 1667.

The protein belongs to the type IV collagen family. As to quaternary structure, there are six type IV collagen isoforms, alpha 1(IV)-alpha 6(IV), each of which can form a triple helix structure with 2 other chains to generate type IV collagen network. Prolines at the third position of the tripeptide repeating unit (G-X-Y) are hydroxylated in some or all of the chains. Post-translationally, type IV collagens contain numerous cysteine residues which are involved in inter- and intramolecular disulfide bonding. 12 of these, located in the NC1 domain, are conserved in all known type IV collagens. In terms of processing, the trimeric structure of the NC1 domains is stabilized by covalent bonds between Lys and Met residues. As to expression, isoform 2 is found in kidney.

The protein resides in the secreted. It localises to the extracellular space. The protein localises to the extracellular matrix. It is found in the basement membrane. In terms of biological role, type IV collagen is the major structural component of glomerular basement membranes (GBM), forming a 'chicken-wire' meshwork together with laminins, proteoglycans and entactin/nidogen. The protein is Collagen alpha-5(IV) chain (COL4A5) of Homo sapiens (Human).